Reading from the N-terminus, the 205-residue chain is Ribonuclease HII (205 aa).

The 203-residue stretch at 1 to 203 (MKAGIDEAGK…VSNLRQKTLD (203 aa)) folds into the RNase H type-2 domain. 2 residues coordinate a divalent metal cation: D6 and E7. R46 is a binding site for substrate. D101 provides a ligand contact to a divalent metal cation. Positions 143, 146, and 164 each coordinate substrate.

Belongs to the RNase HII family. It depends on Mn(2+) as a cofactor. Mg(2+) serves as cofactor.

Its subcellular location is the cytoplasm. It carries out the reaction Endonucleolytic cleavage to 5'-phosphomonoester.. Endonuclease that specifically degrades the RNA of RNA-DNA hybrids. This chain is Ribonuclease HII (rnhB), found in Archaeoglobus fulgidus (strain ATCC 49558 / DSM 4304 / JCM 9628 / NBRC 100126 / VC-16).